Consider the following 451-residue polypeptide: MAEHGAPAPAIPNGGCAARLPGNKVTVVLGAQWGDEGKGKVVDLLAQDADIVCRCQGGNNAGHTVVVDSVEYDFHLLPSGIINPKVTAFIGNGVVIHLPGLFEETEKNLKKGKGLEGWEKRLVISDRAHIVFDFHQAADGIQEQQRQEQAGKNLGTTKKGIGPVYSSKAARSGLRMCDLVSDFDEFSERFKVLANQYKAIYPTLEIDIEGELKKLKAYMEKVKPMVKDGVYFMYEALHGPPKKILVEGANAALLDIDFGTYPFVTSSNCTVGGVCTGLGMPPQNVGEVYGVVKAYTTRVGIGAFPTEQDNEIGELLQMRGKEFGVTTGRKRRCGWLDLVQLRYAYMINGFTALALTKLDILDVFPEIKVGVAYKLDGEVIPHFPANHEVLSKVEVKYETLPGWDTDISNARTFDELPVNAQNYVRFIEMELGVPVKWIGVGKSRESMIQLF.

GTP contacts are provided by residues 34-40 (GDEGKGK) and 62-64 (GHT). Catalysis depends on Asp35, which acts as the Proton acceptor. The Mg(2+) site is built by Asp35 and Gly62. Asp35 provides a ligand contact to substrate. IMP contacts are provided by residues 35–38 (DEGK), 60–63 (NAGH), Thr157, Arg171, Asn250, Thr265, and Arg329. His63 functions as the Proton donor in the catalytic mechanism. Residue 325–331 (VTTGRKR) participates in substrate binding. Residues Arg331, 357–359 (KLD), and 439–442 (GVGK) contribute to the GTP site.

This sequence belongs to the adenylosuccinate synthetase family. In terms of assembly, homodimer. Requires Mg(2+) as cofactor.

The protein resides in the cytoplasm. Its subcellular location is the mitochondrion. The catalysed reaction is IMP + L-aspartate + GTP = N(6)-(1,2-dicarboxyethyl)-AMP + GDP + phosphate + 2 H(+). Its pathway is purine metabolism; AMP biosynthesis via de novo pathway; AMP from IMP: step 1/2. Inhibited competitively by AMP and IMP and non-competitively by fructose 1,6-bisphosphate. Its function is as follows. Plays an important role in the de novo pathway and in the salvage pathway of purine nucleotide biosynthesis. Catalyzes the first committed step in the biosynthesis of AMP from IMP. The chain is Adenylosuccinate synthetase isozyme 2 from Gallus gallus (Chicken).